The following is a 467-amino-acid chain: Receptor-like cytosolic serine/threonine-protein kinase RBK1 (467 aa).

Residues 1–24 (MAVEDNKNSESKNHQEVELHRNDL) are compositionally biased toward basic and acidic residues. The interval 1–73 (MAVEDNKNSE…PFSNTTKTVS (73 aa)) is disordered. A compositionally biased stretch (low complexity) spans 40–71 (SDSDNSSSSCSSCSSDDKSSSTSSPFSNTTKT). Threonine 142 is subject to Phosphothreonine. One can recognise a Protein kinase domain in the interval 153-430 (FNPENMIGKG…LRGEDGPAEL (278 aa)). ATP-binding positions include 159–167 (IGKGGHAEV) and lysine 181. Aspartate 278 (proton acceptor) is an active-site residue. Phosphoserine is present on serine 282. Threonine 318 carries the phosphothreonine modification. At tyrosine 326 the chain carries Phosphotyrosine.

The protein belongs to the protein kinase superfamily. Ser/Thr protein kinase family. As to quaternary structure, interacts with ARAC5 and ARAC10. As to expression, mostly expressed in vasculature, hydathode endothem, leaf mesophyll cells and trichomes.

The protein resides in the cytoplasm. The protein localises to the endomembrane system. It is found in the nucleus. The enzyme catalyses L-seryl-[protein] + ATP = O-phospho-L-seryl-[protein] + ADP + H(+). It catalyses the reaction L-threonyl-[protein] + ATP = O-phospho-L-threonyl-[protein] + ADP + H(+). This is Receptor-like cytosolic serine/threonine-protein kinase RBK1 (RBK1) from Arabidopsis thaliana (Mouse-ear cress).